The primary structure comprises 1046 residues: Piwi-like protein 2 (1046 aa).

The span at 1–12 (MDPKRPTFPSPP) shows a compositional bias: pro residues. The disordered stretch occupies residues 1–35 (MDPKRPTFPSPPGVIRAPWQQSTEDQSQLLDQPSL). Polar residues predominate over residues 19–31 (WQQSTEDQSQLLD). Residues 462 to 575 (SVLDVMNLIY…LLPELSFMTG (114 aa)) enclose the PAZ domain. Residues 741-1032 (LVVCIMTGNR…LAFLSGQYLH (292 aa)) enclose the Piwi domain. Residues aspartate 818, glutamate 856, aspartate 888, and histidine 1021 contribute to the active site.

It belongs to the argonaute family. Piwi subfamily. In terms of assembly, component of the PET complex. Mg(2+) serves as cofactor. Post-translationally, methylated on arginine residues; required for the interaction with Tudor domain-containing protein and subsequent localization to the meiotic nuage, also named P granule. As to expression, detected in primordial germ cells (PGCs) from 3 dpf. In adult, it is found in both the female and male gonad. In the ovary, it is present in all stages of germ cell differentiation. In testis, it is present in mitotic and meiotic germ cells. No protein has been detected in the fully differentiated sperm cell.

It is found in the cytoplasm. It localises to the nucleus. Endoribonuclease that plays a central role during spermatogenesis by repressing transposable elements and preventing their mobilization, which is essential for the germline integrity. Plays an essential role in germ cell differentiation and meiosis, independently of the function in transposable elements repression. Acts via the piRNA metabolic process, which mediates the repression of transposable elements during meiosis by forming complexes composed of piRNAs and Piwi proteins and govern the methylation and subsequent repression of transposons. During piRNA biosynthesis, plays a key role in the piRNA amplification loop, also named ping-pong amplification cycle, by acting as a 'slicer-competent' piRNA endoribonuclease that cleaves primary piRNAs, which are then loaded onto 'slicer-incompetent' piwil4. Piwil2 slicing produces a pre-miRNA intermediate, which is then processed in mature piRNAs, and as well as a 16 nucleotide by-product that is degraded. Required for piwil4/miwi2 nuclear localization and association with secondary piRNAs antisense. Represses circadian rhythms by promoting the stability and activity of core clock components BMAL1 and CLOCK. This chain is Piwi-like protein 2 (piwil2), found in Danio rerio (Zebrafish).